Consider the following 425-residue polypeptide: Glutamyl-tRNA(Gln) amidotransferase subunit A (425 aa).

Active-site charge relay system residues include K29 and S104. S128 functions as the Acyl-ester intermediate in the catalytic mechanism.

It belongs to the amidase family. GatA subfamily. Heterotrimer of A, B and C subunits.

The catalysed reaction is L-glutamyl-tRNA(Gln) + L-glutamine + ATP + H2O = L-glutaminyl-tRNA(Gln) + L-glutamate + ADP + phosphate + H(+). In terms of biological role, allows the formation of correctly charged Gln-tRNA(Gln) through the transamidation of misacylated Glu-tRNA(Gln) in organisms which lack glutaminyl-tRNA synthetase. The reaction takes place in the presence of glutamine and ATP through an activated gamma-phospho-Glu-tRNA(Gln). The polypeptide is Glutamyl-tRNA(Gln) amidotransferase subunit A (Haloarcula marismortui (strain ATCC 43049 / DSM 3752 / JCM 8966 / VKM B-1809) (Halobacterium marismortui)).